A 293-amino-acid polypeptide reads, in one-letter code: Ribosomal protein L11 methyltransferase (293 aa).

S-adenosyl-L-methionine is bound by residues T145, G166, D188, and N230.

Belongs to the methyltransferase superfamily. PrmA family.

The protein localises to the cytoplasm. The enzyme catalyses L-lysyl-[protein] + 3 S-adenosyl-L-methionine = N(6),N(6),N(6)-trimethyl-L-lysyl-[protein] + 3 S-adenosyl-L-homocysteine + 3 H(+). Functionally, methylates ribosomal protein L11. This is Ribosomal protein L11 methyltransferase from Klebsiella pneumoniae (strain 342).